The sequence spans 116 residues: Methionine-R-sulfoxide reductase B1 (116 aa).

One can recognise a MsrB domain in the interval 1 to 106; it reads MSFCSFFGGE…FSSSLKFVPK (106 aa). Zn(2+)-binding residues include cysteine 23, cysteine 26, cysteine 71, and cysteine 74. Selenocysteine 95 acts as the Nucleophile in catalysis. Position 95 (selenocysteine 95) is a non-standard amino acid, selenocysteine.

This sequence belongs to the MsrB Met sulfoxide reductase family. The cofactor is Zn(2+). Truncated MSRB1/SEPX1 proteins produced by failed UGA/Sec decoding are ubiquitinated by the CRL2(FEM1C) E3 ubiquitin-protein ligase complex.

The protein resides in the cytoplasm. Its subcellular location is the nucleus. It localises to the cytoskeleton. It carries out the reaction L-methionyl-[protein] + [thioredoxin]-disulfide + H2O = L-methionyl-(R)-S-oxide-[protein] + [thioredoxin]-dithiol. The catalysed reaction is [thioredoxin]-disulfide + L-methionine + H2O = L-methionine (R)-S-oxide + [thioredoxin]-dithiol. Methionine-sulfoxide reductase that specifically reduces methionine (R)-sulfoxide back to methionine. While in many cases, methionine oxidation is the result of random oxidation following oxidative stress, methionine oxidation is also a post-translational modification that takes place on specific residue. Acts as a regulator of actin assembly by reducing methionine (R)-sulfoxide mediated by MICALs (MICAL1, MICAL2 or MICAL3) on actin, thereby promoting filament repolymerization. Plays a role in innate immunity by reducing oxidized actin, leading to actin repolymerization in macrophages. This chain is Methionine-R-sulfoxide reductase B1 (Msrb1), found in Mus musculus (Mouse).